Here is a 23-residue protein sequence, read N- to C-terminus: Caerulein precursor fragment BM2 (23 aa).

As to expression, expressed by the skin glands.

Its subcellular location is the secreted. In terms of biological role, antimicrobial peptide. This Xenopus boumbaensis (Mawa clawed frog) protein is Caerulein precursor fragment BM2.